We begin with the raw amino-acid sequence, 1978 residues long: Protein MOR1 (1978 aa).

HEAT repeat units lie at residues 48-86 (DPRL…AADS) and 165-202 (IPPK…WIGK). The segment at 230–264 (AGAKPTRKIRSEQDKEPEAEASSDVVGDGPSEEAV) is disordered. The segment covering 238–247 (IRSEQDKEPE) has biased composition (basic and acidic residues). HEAT repeat units lie at residues 322–359 (GDFS…GLRT), 363–400 (ASSR…AGCL), and 442–479 (KAHK…SVGM). A disordered region spans residues 501–587 (IAGSGGGDQA…SVEPPEDVEP (87 aa)). Over residues 510 to 527 (AGTSSVTVQSSVGSTATG) the composition is skewed to low complexity. Positions 565 to 577 (GKKDGSVRNEGSK) are enriched in basic and acidic residues. 4 HEAT repeats span residues 849 to 886 (DIST…EANK), 890 to 928 (PTGT…AMGP), 932 to 969 (KASK…AVHL), and 1008 to 1045 (VDAI…VSGQ). The disordered stretch occupies residues 1087–1115 (SKGVTKISKSTSNGTLKQGNRSRAVPTKG). The segment covering 1093–1107 (ISKSTSNGTLKQGNR) has biased composition (polar residues). 4 HEAT repeats span residues 1230-1253 (LKVL…MTEA), 1254-1286 (EAAI…QIIQ), 1287-1325 (AYSV…TCGT), and 1328-1365 (GGLL…ILGA). The span at 1393–1403 (MEKRREGKPGE) shows a compositional bias: basic and acidic residues. The tract at residues 1393–1431 (MEKRREGKPGEARAALRRSVRDSGPEVAEQSGDISQTVP) is disordered. Residues 1535–1575 (RSCKYVLNTLMQTFQNKKLAHAVKEGTLESLITELLLWLLD) form an HEAT 14 repeat. Residues 1837–1862 (AAAGRTPSSLPLSTPPPSSLALPSPD) are disordered.

This sequence belongs to the TOG/XMAP215 family. In terms of tissue distribution, expressed in roots, cotyledons, rosette leaves, stems, open flowers and green siliques.

The protein localises to the cytoplasm. The protein resides in the cytoskeleton. Its subcellular location is the phragmoplast. It localises to the spindle. Microtubule-binding protein that is essential for cortical microtubules organization and function. Essential for maintaining the interphase cortical array and for correct morphogenesis. Promotes rapid growth and shrinkage of microtubules and suppresses the pausing of interphase microtubules. Regulates the structure and function of microtubule arrays during mitosis and cytokinesis. Probably not required for cellulose microfibrils alignment in roots. The protein is Protein MOR1 (MOR1) of Arabidopsis thaliana (Mouse-ear cress).